Here is a 373-residue protein sequence, read N- to C-terminus: Dual-specificity RNA methyltransferase RlmN (373 aa).

The active-site Proton acceptor is Glu94. The 240-residue stretch at 100-339 (EDDRATLCVS…VIVRKTRGDD (240 aa)) folds into the Radical SAM core domain. Cys107 and Cys344 are disulfide-bonded. Positions 114, 118, and 121 each coordinate [4Fe-4S] cluster. Residues 168-169 (GE), Ser200, 222-224 (SIH), and Asn301 contribute to the S-adenosyl-L-methionine site. Cys344 functions as the S-methylcysteine intermediate in the catalytic mechanism.

This sequence belongs to the radical SAM superfamily. RlmN family. The cofactor is [4Fe-4S] cluster.

Its subcellular location is the cytoplasm. It catalyses the reaction adenosine(2503) in 23S rRNA + 2 reduced [2Fe-2S]-[ferredoxin] + 2 S-adenosyl-L-methionine = 2-methyladenosine(2503) in 23S rRNA + 5'-deoxyadenosine + L-methionine + 2 oxidized [2Fe-2S]-[ferredoxin] + S-adenosyl-L-homocysteine. The catalysed reaction is adenosine(37) in tRNA + 2 reduced [2Fe-2S]-[ferredoxin] + 2 S-adenosyl-L-methionine = 2-methyladenosine(37) in tRNA + 5'-deoxyadenosine + L-methionine + 2 oxidized [2Fe-2S]-[ferredoxin] + S-adenosyl-L-homocysteine. Its function is as follows. Specifically methylates position 2 of adenine 2503 in 23S rRNA and position 2 of adenine 37 in tRNAs. m2A2503 modification seems to play a crucial role in the proofreading step occurring at the peptidyl transferase center and thus would serve to optimize ribosomal fidelity. The sequence is that of Dual-specificity RNA methyltransferase RlmN from Shewanella sp. (strain W3-18-1).